Reading from the N-terminus, the 214-residue chain is Pyridoxine/pyridoxamine 5'-phosphate oxidase (214 aa).

Residues 8 to 11 and Lys-66 contribute to the substrate site; that span reads RTNY. Residues 61–66, 76–77, Arg-82, Lys-83, and Gln-105 contribute to the FMN site; these read RIVLIK and FT. Tyr-123, Arg-127, and Ser-131 together coordinate substrate. Residues 140–141 and Trp-184 each bind FMN; that span reads QS. 190–192 lines the substrate pocket; the sequence is RLH. Arg-194 serves as a coordination point for FMN.

This sequence belongs to the pyridoxamine 5'-phosphate oxidase family. In terms of assembly, homodimer. Requires FMN as cofactor.

The enzyme catalyses pyridoxamine 5'-phosphate + O2 + H2O = pyridoxal 5'-phosphate + H2O2 + NH4(+). It catalyses the reaction pyridoxine 5'-phosphate + O2 = pyridoxal 5'-phosphate + H2O2. It functions in the pathway cofactor metabolism; pyridoxal 5'-phosphate salvage; pyridoxal 5'-phosphate from pyridoxamine 5'-phosphate: step 1/1. Its pathway is cofactor metabolism; pyridoxal 5'-phosphate salvage; pyridoxal 5'-phosphate from pyridoxine 5'-phosphate: step 1/1. Its function is as follows. Catalyzes the oxidation of either pyridoxine 5'-phosphate (PNP) or pyridoxamine 5'-phosphate (PMP) into pyridoxal 5'-phosphate (PLP). The sequence is that of Pyridoxine/pyridoxamine 5'-phosphate oxidase from Burkholderia pseudomallei (strain 1106a).